An 852-amino-acid polypeptide reads, in one-letter code: Bifunctional heparan sulfate N-deacetylase/N-sulfotransferase 1 (852 aa).

At 1 to 13 the chain is on the cytoplasmic side; that stretch reads MIITPYLNRKITR. The helical; Signal-anchor for type II membrane protein transmembrane segment at 14–34 threads the bilayer; the sequence is PLKWILALIFLYLIYICLFSN. Residues 34–574 form a heparan sulfate N-deacetylase 1 region; that stretch reads NNSKPPKPRK…PRHHAILPPS (541 aa). Over 35–852 the chain is Lumenal; that stretch reads NSKPPKPRKK…WLEESVRIRA (818 aa). 7 N-linked (GlcNAc...) asparagine glycosylation sites follow: Asn-50, Asn-72, Asn-261, Asn-328, Asn-377, Asn-428, and Asn-576. The heparan sulfate N-sulfotransferase 1 stretch occupies residues 575-852; sequence INCTKKSLPD…WLEESVRIRA (278 aa). Lys-592 acts as the For sulfotransferase activity in catalysis. 3'-phosphoadenylyl sulfate is bound at residue 592 to 596; it reads KTGST. An N-linked (GlcNAc...) asparagine glycan is attached at Asn-607. 3'-phosphoadenylyl sulfate is bound at residue Ser-686. N-linked (GlcNAc...) asparagine glycosylation occurs at Asn-712. Cys-789 and Cys-798 are joined by a disulfide. Residue 803–807 coordinates 3'-phosphoadenylyl sulfate; that stretch reads KGRKY.

The protein belongs to the sulfotransferase 1 family. NDST subfamily. In terms of assembly, monomer. In terms of tissue distribution, present in some specific neurons in head and tail regions and muscles.

It is found in the golgi apparatus membrane. It carries out the reaction alpha-D-glucosaminyl-[heparan sulfate](n) + 3'-phosphoadenylyl sulfate = N-sulfo-alpha-D-glucosaminyl-[heparan sulfate](n) + adenosine 3',5'-bisphosphate + 2 H(+). The protein operates within glycan metabolism; heparan sulfate biosynthesis. Its pathway is glycan metabolism; heparin biosynthesis. Functionally, essential bifunctional enzyme that catalyzes both the N-deacetylation and the N-sulfation of glucosamine (GlcNAc) of the glycosaminoglycan in heparan sulfate. Modifies the GlcNAc-GlcA disaccharide repeating sugar backbone to make N-sulfated heparosan, a prerequisite substrate for later modifications in heparin biosynthesis. This is Bifunctional heparan sulfate N-deacetylase/N-sulfotransferase 1 (hst-1) from Caenorhabditis elegans.